Consider the following 183-residue polypeptide: Ribosome-recycling factor (183 aa).

The protein belongs to the RRF family.

The protein localises to the cytoplasm. Responsible for the release of ribosomes from messenger RNA at the termination of protein biosynthesis. May increase the efficiency of translation by recycling ribosomes from one round of translation to another. In Deinococcus radiodurans (strain ATCC 13939 / DSM 20539 / JCM 16871 / CCUG 27074 / LMG 4051 / NBRC 15346 / NCIMB 9279 / VKM B-1422 / R1), this protein is Ribosome-recycling factor.